Reading from the N-terminus, the 599-residue chain is Elongation factor 4 (599 aa).

One can recognise a tr-type G domain in the interval 5–187 (SHIRNFSIIA…HLVRVIPPPQ (183 aa)). Residues 17–22 (DHGKST) and 134–137 (NKMD) each bind GTP.

The protein belongs to the TRAFAC class translation factor GTPase superfamily. Classic translation factor GTPase family. LepA subfamily.

The protein resides in the cell inner membrane. It carries out the reaction GTP + H2O = GDP + phosphate + H(+). Functionally, required for accurate and efficient protein synthesis under certain stress conditions. May act as a fidelity factor of the translation reaction, by catalyzing a one-codon backward translocation of tRNAs on improperly translocated ribosomes. Back-translocation proceeds from a post-translocation (POST) complex to a pre-translocation (PRE) complex, thus giving elongation factor G a second chance to translocate the tRNAs correctly. Binds to ribosomes in a GTP-dependent manner. The sequence is that of Elongation factor 4 from Azotobacter vinelandii (strain DJ / ATCC BAA-1303).